We begin with the raw amino-acid sequence, 473 residues long: Beta-secretase 1 (473 aa).

The first 21 residues, 1–21 (MAPALPWLLLWVGSGVLPVHG), serve as a signal peptide directing secretion. A propeptide spanning residues 22 to 45 (TQDGIRLPLRSGLAGAPLGLRLPR) is cleaved from the precursor. Residues 22–429 (TQDGIRLPLR…PQTDESTLMT (408 aa)) lie on the Extracellular side of the membrane. The Peptidase A1 domain maps to 72–388 (YYVEMTVGSP…DRARKRIGFA (317 aa)). The active site involves aspartate 90. Lysine 123 is modified (N6-acetyllysine). Residues asparagine 150, asparagine 169, and asparagine 195 are each glycosylated (N-linked (GlcNAc...) asparagine). 3 disulfide bridges follow: cysteine 188–cysteine 392, cysteine 250–cysteine 415, and cysteine 302–cysteine 352. Residues lysine 247, lysine 251, and lysine 257 each carry the N6-acetyllysine modification. Aspartate 261 is a catalytic residue. 3 positions are modified to N6-acetyllysine: lysine 271, lysine 272, and lysine 279. N-linked (GlcNAc...) asparagine glycosylation occurs at asparagine 326. Residues 430 to 450 (IAYVMAAICALFMLPLCLMVC) form a helical membrane-spanning segment. 4 S-palmitoyl cysteine lipidation sites follow: cysteine 446, cysteine 450, cysteine 454, and cysteine 457. Topologically, residues 451–473 (QWRCLRCLRHQHDDFADDISLLK) are cytoplasmic. Residues 451–473 (QWRCLRCLRHQHDDFADDISLLK) form an interaction with RTN3 region. The short motif at 468-472 (DISLL) is the DXXLL element. Serine 470 carries the phosphoserine modification. A Glycyl lysine isopeptide (Lys-Gly) (interchain with G-Cter in ubiquitin) cross-link involves residue lysine 473.

It belongs to the peptidase A1 family. As to quaternary structure, monomer. Interacts (via DXXLL motif) with GGA1, GGA2 and GGA3 (via their VHS domain); the interaction highly increases when BACE1 is phosphorylated at Ser-470. Interacts with RTN1; RTN2; RTN3 and RTN4; the interaction leads to inhibition of amyloid precursor protein processing. Interacts with SNX6. Interacts with PCSK9. Interacts with NAT8 and NAT8B. Interacts with BIN1. Interacts (via extracellular domain) with ADAM10 (via extracellular domain). Interacts with SORL1; this interaction may affect binding with APP and hence reduce APP cleavage. Interacts with NRDC AND NRG1. Palmitoylation mediates lipid raft localization. Post-translationally, acetylated in the endoplasmic reticulum at Lys-123, Lys-247, Lys-251, Lys-257, Lys-271, Lys-272, and Lys-279. Acetylation by NAT8 and NAT8B is transient and deacetylation probably occurs in the Golgi. Acetylation regulates the maturation, the transport to the plasma membrane, the stability and the expression of the protein. In terms of processing, ubiquitinated at Lys-473, ubiquitination leads to lysosomal degradation. Monoubiquitinated and 'Lys-63'-linked polyubitinated. Deubiquitnated by USP8; inhibits lysosomal degradation. Phosphorylation at Ser-470 is required for interaction with GGA1 and retrograded transport from endosomal compartments to the trans-Golgi network. Non-phosphorylated BACE1 enters a direct recycling route to the cell surface. Post-translationally, N-Glycosylated. Addition of a bisecting N-acetylglucosamine by MGAT3 blocks lysosomal targeting, further degradation and is required for maintaining stability under stress conditions.

It is found in the cell membrane. The protein localises to the golgi apparatus. It localises to the trans-Golgi network. The protein resides in the endoplasmic reticulum. Its subcellular location is the endosome. It is found in the cell surface. The protein localises to the cytoplasmic vesicle membrane. It localises to the membrane raft. The protein resides in the lysosome. Its subcellular location is the late endosome. It is found in the early endosome. The protein localises to the recycling endosome. It localises to the cell projection. The protein resides in the axon. Its subcellular location is the dendrite. It catalyses the reaction Broad endopeptidase specificity. Cleaves Glu-Val-Asn-Leu-|-Asp-Ala-Glu-Phe in the Swedish variant of Alzheimer's amyloid precursor protein.. Its activity is regulated as follows. Inhibited by RTN3 and RTN4. Functionally, responsible for the proteolytic processing of the amyloid precursor protein (APP). Cleaves at the N-terminus of the A-beta peptide sequence, between residues 671 and 672 of APP, leads to the generation and extracellular release of beta-cleaved soluble APP, and a corresponding cell-associated C-terminal fragment which is later released by gamma-secretase. Cleaves CHL1. This chain is Beta-secretase 1 (BACE1), found in Cavia porcellus (Guinea pig).